Reading from the N-terminus, the 418-residue chain is L-methionine/branched-chain amino acid exporter YjeH (418 aa).

Residues 1–15 (MSGLKQELGLAQGIG) lie on the Periplasmic side of the membrane. A helical membrane pass occupies residues 16 to 36 (LLSTSLLGTGVFAVPALAALV). Over 37–41 (AGNNS) the chain is Cytoplasmic. A helical transmembrane segment spans residues 42–62 (LWAWPVLIILVFPIAIVFAIL). Residues 63–89 (GRHYPSAGGVAHFVGMAFGSRLERVTG) lie on the Periplasmic side of the membrane. The helical transmembrane segment at 90 to 110 (WLFLSVIPVGLPAALQIAAGF) threads the bilayer. Residues 111-113 (GQA) lie on the Cytoplasmic side of the membrane. The helical transmembrane segment at 114–134 (MFGWHSWQLLLAELGTLALVW) threads the bilayer. Topologically, residues 135 to 147 (YIGTRGASSSANL) are periplasmic. The chain crosses the membrane as a helical span at residues 148-168 (QTVIAGLIVALIVAIWWAGDI). Residues 169-182 (KPANIPFPAPGNIE) lie on the Cytoplasmic side of the membrane. Residues 183-203 (LTGLFAALSVMFWCFVGLEAF) traverse the membrane as a helical segment. Over 204–219 (AHLASEFKNPERDFPR) the chain is Periplasmic. A helical membrane pass occupies residues 220-240 (ALMIGLLLAGLVYWGCTVVVL). Topologically, residues 241–257 (HFDAYGEKMAAAASLPK) are cytoplasmic. A helical membrane pass occupies residues 258 to 278 (IVVQLFGVGALWIACVIGYLA). At 279-317 (CFASLNIYIQSFARLVWSQAQHNPDHYLARLSSRHIPNN) the chain is on the periplasmic side. The helical transmembrane segment at 318-338 (ALNAVLGCCVVSTLVIHALEI) threads the bilayer. Residues 339-341 (NLD) lie on the Cytoplasmic side of the membrane. The chain crosses the membrane as a helical span at residues 342 to 362 (ALIIYANGIFIMIYLLCMLAG). Residues 363–378 (CKLLQGRYRLLAVVGG) are Periplasmic-facing. A helical membrane pass occupies residues 379 to 399 (LLCVLLLAMVGWKSLYALIML). Residues 400–418 (AGLWLLLPKRKTPENGITT) lie on the Cytoplasmic side of the membrane.

The protein belongs to the amino acid-polyamine-organocation (APC) superfamily. Amino acid efflux (AAE) (TC 2.A.3.13) family.

The protein resides in the cell inner membrane. It carries out the reaction L-methionine(in) + H(+)(out) = L-methionine(out) + H(+)(in). The enzyme catalyses L-leucine(in) + H(+)(out) = L-leucine(out) + H(+)(in). The catalysed reaction is L-isoleucine(in) + H(+)(out) = L-isoleucine(out) + H(+)(in). It catalyses the reaction L-valine(in) + H(+)(out) = L-valine(out) + H(+)(in). Its activity is regulated as follows. Efflux of L-methionine is inhibited by the proton ionophore carbonyl cyanide m-chlorophenylhydrazone (CCCP). Catalyzes the efflux of L-methionine, L-leucine, L-isoleucine and L-valine. Activity is dependent on electrochemical potential. This is L-methionine/branched-chain amino acid exporter YjeH (yjeH) from Escherichia coli (strain K12).